The following is a 451-amino-acid chain: Tubulin gamma-1 chain (451 aa).

A Phosphoserine; by BRSK1 modification is found at S131. Residue 142–148 participates in GTP binding; that stretch reads AGGTGSG.

The protein belongs to the tubulin family. In terms of assembly, component of the gamma-tubulin ring complex (gTuRC) consisting of TUBGCP2, TUBGCP3, TUBGCP4, TUBGCP5 and TUBGCP6 and gamma-tubulin TUBG1 or TUBG2. TUBGCP2, TUBGCP3, TUBGCP4, TUBGCP5 and TUBGCP6 assemble in a 5:5:2:1:1 stoichiometry; each is associated with a gamma-tubulin, thereby arranging 14 gamma-tubulins in a helical manner. Gamma-tubulin at the first position is blocked by TUBGCP3 at the last position, allowing 13 protafilaments to grow into a microtubule. The gTuRC (via TUBGCP3 and TUBGCP6) interacts with ACTB and MZT1; the interactions form a luminal bridge that stabilizes the initial structure during complex assembly. The gTuRC (via TUBGCP2) interacts with MZT2A/MZT2B and CDK5RAP2 (via CM1 motif); the interactions play a role in gTuRC activation. Interacts with alpha-beta tubulin heterodimers; the interaction allows microtubules to nucleate from the gTuRC. Interacts with B9D2. Interacts with CDK5RAP2; the interaction is leading to centrosomal localization of TUBG1 and CDK5RAP2. Interacts with CIMAP3. Interacts with SAS6 and NUP62 at the centrosome. Interacts with EML3 (phosphorylated at 'Thr-881') and HAUS8. Interacts with DNM2; this interaction may participate in centrosome cohesion. Interacts with CCDC66. Post-translationally, phosphorylation at Ser-131 by BRSK1 regulates centrosome duplication, possibly by mediating relocation of gamma-tubulin and its associated proteins from the cytoplasm to the centrosome.

Its subcellular location is the cytoplasm. It localises to the cytoskeleton. It is found in the microtubule organizing center. The protein resides in the centrosome. The protein localises to the spindle. In terms of biological role, tubulin is the major constituent of microtubules, protein filaments consisting of alpha- and beta-tubulin heterodimers. Gamma-tubulin is a key component of the gamma-tubulin ring complex (gTuRC) which mediates microtubule nucleation. The gTuRC regulates the minus-end nucleation of alpha-beta tubulin heterodimers that grow into microtubule protafilaments, a critical step in centrosome duplication and spindle formation. This Mus musculus (Mouse) protein is Tubulin gamma-1 chain.